The primary structure comprises 84 residues: Anthracycline acyl carrier protein DauA (84 aa).

Positions 3-80 (ELSLAELREI…SMLIFVNERL (78 aa)) constitute a Carrier domain. Ser40 is modified (O-(pantetheine 4'-phosphoryl)serine).

It functions in the pathway antibiotic biosynthesis; daunorubicin biosynthesis. It participates in antibiotic biosynthesis; carminomycin biosynthesis. The protein operates within antibiotic biosynthesis; rhodomycin biosynthesis. Its pathway is antibiotic biosynthesis; aclacinomycin biosynthesis. In terms of biological role, involved in the biosynthesis of aklanonate which is an important precursor common to the formation of the clinically significant anthracyclines such as carminomycin, daunorubicin (daunomycin), rhodomycin, aclacinomycin T (aklavin) and aclacinomycin A (aclarubicin). These compounds are aromatic polyketide antibiotics that exhibit high cytotoxicity and are widely applied in the chemotherapy of a variety of cancers. The protein is Anthracycline acyl carrier protein DauA (dauA) of Streptomyces sp. (strain C5).